Reading from the N-terminus, the 264-residue chain is Glutamate racemase (264 aa).

Residues 10-11 (DS) and 42-43 (YG) contribute to the substrate site. The active-site Proton donor/acceptor is the cysteine 73. Residue 74 to 75 (NT) coordinates substrate. Residue cysteine 183 is the Proton donor/acceptor of the active site. 184–185 (TH) is a binding site for substrate.

It belongs to the aspartate/glutamate racemases family.

It catalyses the reaction L-glutamate = D-glutamate. The protein operates within cell wall biogenesis; peptidoglycan biosynthesis. Provides the (R)-glutamate required for cell wall biosynthesis. The polypeptide is Glutamate racemase (Streptococcus gordonii (strain Challis / ATCC 35105 / BCRC 15272 / CH1 / DL1 / V288)).